Reading from the N-terminus, the 442-residue chain is Trigger factor (442 aa).

Residues 162–247 (GDRMTFDFEG…VKAIESRELP (86 aa)) form the PPIase FKBP-type domain.

The protein belongs to the FKBP-type PPIase family. Tig subfamily.

Its subcellular location is the cytoplasm. It catalyses the reaction [protein]-peptidylproline (omega=180) = [protein]-peptidylproline (omega=0). Involved in protein export. Acts as a chaperone by maintaining the newly synthesized protein in an open conformation. Functions as a peptidyl-prolyl cis-trans isomerase. The sequence is that of Trigger factor from Magnetococcus marinus (strain ATCC BAA-1437 / JCM 17883 / MC-1).